A 135-amino-acid chain; its full sequence is Transcription antitermination protein NusB (135 aa).

Belongs to the NusB family.

In terms of biological role, involved in transcription antitermination. Required for transcription of ribosomal RNA (rRNA) genes. Binds specifically to the boxA antiterminator sequence of the ribosomal RNA (rrn) operons. The chain is Transcription antitermination protein NusB from Clostridium perfringens (strain ATCC 13124 / DSM 756 / JCM 1290 / NCIMB 6125 / NCTC 8237 / Type A).